The sequence spans 551 residues: Formate--tetrahydrofolate ligase (551 aa).

Residue 54-61 participates in ATP binding; that stretch reads TPPGEGKT.

It belongs to the formate--tetrahydrofolate ligase family.

The enzyme catalyses (6S)-5,6,7,8-tetrahydrofolate + formate + ATP = (6R)-10-formyltetrahydrofolate + ADP + phosphate. It functions in the pathway one-carbon metabolism; tetrahydrofolate interconversion. The protein is Formate--tetrahydrofolate ligase of Myxococcus xanthus (strain DK1622).